The following is a 227-amino-acid chain: Cysteine-rich hydrophobic domain-containing protein 1 (227 aa).

The segment at 1–84 (MSILLPNMAE…PPRVVSEEHL (84 aa)) is disordered. The segment covering 13–23 (TISELEEEEEA) has biased composition (acidic residues). Positions 24-44 (ATSSSSPSSSPSSSSSSSVSG) are enriched in low complexity. A compositionally biased stretch (acidic residues) spans 45–72 (PDEDEEDEEEEEEEDEEEEDEEEEEEEV). Residues 46–73 (DEDEEDEEEEEEEDEEEEDEEEEEEEVP) are a coiled coil.

This sequence belongs to the CHIC family. Palmitoylated. In terms of tissue distribution, expressed moderately in the brain.

Its subcellular location is the cell membrane. It is found in the cytoplasmic vesicle. This is Cysteine-rich hydrophobic domain-containing protein 1 (Chic1) from Mus musculus (Mouse).